The chain runs to 224 residues: MKINLERLCRRLNYHFNNIAYLKQALTHCSAGSDNYERFEFLGDSILSFVIANELFNRFPLHSEGQLSRLRSFLVKGEMLAEIAREIGLGDYLFLGQGELRSGGFRRTSILADALEAILAAIYLDGGMTAAKQIILMLYSSRLDDPDLNHCLKDAKTQLQEFLQASKFALPEYVLTKIEGDEHAQIFHVTCTIEGVSQVAYGTGPNRRKAEQLAAKAMLEQLQG.

The 123-residue stretch at 5–127 folds into the RNase III domain; sequence LERLCRRLNY…ILAAIYLDGG (123 aa). Residue glutamate 40 coordinates Mg(2+). Residue aspartate 44 is part of the active site. Residues aspartate 113 and glutamate 116 each coordinate Mg(2+). Glutamate 116 is a catalytic residue. The 71-residue stretch at 154 to 224 folds into the DRBM domain; that stretch reads DAKTQLQEFL…AKAMLEQLQG (71 aa).

Belongs to the ribonuclease III family. In terms of assembly, homodimer. It depends on Mg(2+) as a cofactor.

Its subcellular location is the cytoplasm. It catalyses the reaction Endonucleolytic cleavage to 5'-phosphomonoester.. In terms of biological role, digests double-stranded RNA. Involved in the processing of primary rRNA transcript to yield the immediate precursors to the large and small rRNAs (23S and 16S). Processes some mRNAs, and tRNAs when they are encoded in the rRNA operon. Processes pre-crRNA and tracrRNA of type II CRISPR loci if present in the organism. This Legionella pneumophila (strain Paris) protein is Ribonuclease 3.